Reading from the N-terminus, the 242-residue chain is Polycomb group RING finger protein 3 (242 aa).

Residues 17 to 56 (CRLCSGYLIDATTVTECLHTFCRSCLVKYLEENNTCPTCR) form an RING-type zinc finger. The interval 115–149 (AKQHLDPHRNGETKADDSSNKEAAEEKQEEDGDYH) is disordered. Positions 117 to 140 (QHLDPHRNGETKADDSSNKEAAEE) are enriched in basic and acidic residues. The tract at residues 132-242 (SSNKEAAEEK…LHYRPKMDLL (111 aa)) is interaction with BCORL1.

In terms of assembly, component of a PRC1-like complex that contains PCGF3, RNF2 and RYBP. Interacts with CBX6, CBX7 and CBX8. Interacts with BCORL1.

The protein localises to the nucleus. The protein resides in the nucleoplasm. Functionally, component of a Polycomb group (PcG) multiprotein PRC1-like complex, a complex class required to maintain the transcriptionally repressive state of many genes, including Hox genes, throughout development. PcG PRC1 complex acts via chromatin remodeling and modification of histones; it mediates monoubiquitination of histone H2A 'Lys-119', rendering chromatin heritably changed in its expressibility. Within the PRC1-like complex, regulates RNF2 ubiquitin ligase activity. Plays a redundant role with PCGF5 as part of a PRC1-like complex that mediates monoubiquitination of histone H2A 'Lys-119' on the X chromosome and is required for normal silencing of one copy of the X chromosome in XX females. The polypeptide is Polycomb group RING finger protein 3 (PCGF3) (Bos taurus (Bovine)).